A 145-amino-acid chain; its full sequence is Putative antiporter subunit mnhG2 (145 aa).

The next 3 membrane-spanning stretches (helical) occupy residues 11–31, 51–71, and 72–92; these read IAAV…IGIV, VLLT…FFSV, and RLLL…HLVA.

This sequence belongs to the CPA3 antiporters (TC 2.A.63) subunit G family. In terms of assembly, may form a heterooligomeric complex that consists of seven subunits: mnhA2, mnhB2, mnhC2, mnhD2, mnhE2, mnhF2 and mnhG2.

It localises to the cell membrane. The sequence is that of Putative antiporter subunit mnhG2 (mnhG2) from Staphylococcus aureus (strain bovine RF122 / ET3-1).